Reading from the N-terminus, the 638-residue chain is Broad-specificity ulvan lyase (638 aa).

The N-terminal stretch at 1-27 is a signal peptide; sequence MKRRNFIQLSSLATIGMSLPSAGIVNA.

The protein belongs to the polysaccharide lyase 37 family.

Its subcellular location is the periplasm. The enzyme catalyses Endolytic cleavage of (1-&gt;4)-beta-galactosaminic bonds between N-acetylgalactosamine and either D-glucuronic acid or L-iduronic acid to produce a mixture of Delta(4)-unsaturated oligosaccharides of different sizes that are ultimately degraded to Delta(4)-unsaturated tetra- and disaccharides.. It carries out the reaction Elimination of sulfate, appears to act on linkages between N-acetyl-D-glucosamine and uronate. Product is an unsaturated sugar.. In terms of biological role, broad-specificity lyase involved in ulvan degradation. Ulvan is the main polysaccharide component of the Ulvales (green seaweed) cell wall. It is composed of disaccharide building blocks comprising 3-sulfated rhamnose (Rha3S) linked to D-glucuronic acid (GlcA), L-iduronic acid (IduA), or D-xylose (Xyl). Ulvan lyase catalyzes the endolytic cleavage of the glycosidic bond between Rha3S and the uronic acids GlcA or IduA, producing oligosaccharides that have unsaturated 4-deoxy-L-threo-hex-4-enopyranosiduronic acid (deltaUA) at the non-reducing end. This results eventually in the degradation of the ulvan polysaccharide into deltaUA-Rha3S disaccharides and deltaUA-Rha3S-Xyl-Rha3S tetrasaccharides. It is also able to degrade the glycosaminoglycans heparan sulfate and chondroitin sulfate. Not active against pectin, xanthan or alginate. This is Broad-specificity ulvan lyase from Formosa agariphila (strain DSM 15362 / KCTC 12365 / LMG 23005 / KMM 3901 / M-2Alg 35-1).